We begin with the raw amino-acid sequence, 242 residues long: Zinc-finger homeodomain protein 11 (242 aa).

A ZF-HD dimerization-type; degenerate zinc finger spans residues 31-82 (YKECLKNHAANLGGHALDGCGEFMPSPTATSTDPSSLRCAACGCHRNFHRRD). Disordered regions lie at residues 83 to 109 (PSENLNFLTAPPISSPSGTESPPSRHV) and 135 to 161 (PGPSDQDPTVVRSENSSRGAMRKRTRT). The homeobox; atypical DNA-binding region spans 156 to 213 (RKRTRTKFTPEQKIKMRAFAEKAGWKINGCDEKSVREFCNEVGIERGVLKVWMHNNKY).

As to quaternary structure, homo- and heterodimer with other ZFHD proteins. Interacts with HIPP20, HIPP21, HIPP22, HIPP23, HIPP24, HIPP26, HIPP27, HIPP30 and MED25 (via ACID domain). Interacts with NAC019, NAC055 and NAC072 (via NAC binding domain). Binds to ZHD1, ZHD2, ZHD3, ZHD4, ZHD5, ZHD6, ZHD7, ZHD8, ZHD9, ZHD12, ZHD13 and ZHD14. Expressed in roots, inflorescences, open flowers and seeds. Detected in stems and seedlings.

The protein localises to the nucleus. Its function is as follows. Transcription factor involved in the up-regulation of several stress-inducible genes. Acts as a transcriptional activator by interacting with MED25 and NAC proteins. Involved in increased drought tolerance. This chain is Zinc-finger homeodomain protein 11 (ZHD11), found in Arabidopsis thaliana (Mouse-ear cress).